The following is a 189-amino-acid chain: Putative transcription factor ovo-like protein 3 (189 aa).

The segment at 1 to 20 (MPRVFLVRSRRPQPPNWSHL) is disordered. 4 C2H2-type zinc fingers span residues 69 to 91 (LGCP…LKCH), 97 to 119 (HVCH…MRTH), 125 to 148 (FRCG…AKVH), and 164 to 186 (HVCE…RTLH).

It belongs to the krueppel C2H2-type zinc-finger protein family.

The protein resides in the nucleus. In terms of biological role, may act as a transcription regulator. The protein is Putative transcription factor ovo-like protein 3 (Ovol3) of Mus musculus (Mouse).